A 131-amino-acid chain; its full sequence is MSWQAYVDEHLMCEIEGQHLSAAAIVGHDGSVWAQSESFPELKPEEVAGIIKDFDEPGTLAPTGLFVGGTKYMVIQGEPGVVIRGKKGTGGITIKKTGMSLIIGVYDEPMTPGQCNMVVERLGDYLIEQGF.

The cysteines at positions 13 and 115 are disulfide-linked. The Involved in PIP2 interaction signature appears at Val81–Thr97. Residue Thr111 is modified to Phosphothreonine.

This sequence belongs to the profilin family. As to quaternary structure, occurs in many kinds of cells as a complex with monomeric actin in a 1:1 ratio. In terms of processing, phosphorylated by MAP kinases. In terms of tissue distribution, expressed predominantly in endosperm but is also found at low levels in all tissues examined, including mature and germinated pollen.

It is found in the cytoplasm. Its subcellular location is the cytoskeleton. Its function is as follows. Binds to actin and affects the structure of the cytoskeleton. At high concentrations, profilin prevents the polymerization of actin, whereas it enhances it at low concentrations. By binding to PIP2, it inhibits the formation of IP3 and DG. Has a high affinity for poly-proline. The chain is Profilin-4 (PRO4) from Zea mays (Maize).